Here is a 92-residue protein sequence, read N- to C-terminus: Small ribosomal subunit protein uS19c (92 aa).

Belongs to the universal ribosomal protein uS19 family.

The protein localises to the plastid. It is found in the chloroplast. Protein S19 forms a complex with S13 that binds strongly to the 16S ribosomal RNA. In Marchantia polymorpha (Common liverwort), this protein is Small ribosomal subunit protein uS19c (rps19).